We begin with the raw amino-acid sequence, 185 residues long: Thiol:disulfide interchange protein DsbE (185 aa).

Residues 1–4 (MKRN) lie on the Cytoplasmic side of the membrane. Residues 5–25 (VLLLPLLIFLLIAAALLWQLA) traverse the membrane as a helical segment. Topologically, residues 26 to 185 (RNAQGDDPTN…WDRYSREAAQ (160 aa)) are periplasmic. Residues 39-177 (ALTGKPVPAF…WESELKPLWD (139 aa)) form the Thioredoxin domain. The cysteines at positions 80 and 83 are disulfide-linked.

The protein belongs to the thioredoxin family. DsbE subfamily.

It localises to the cell inner membrane. Its function is as follows. Involved in disulfide bond formation. Catalyzes a late, reductive step in the assembly of periplasmic c-type cytochromes, probably the reduction of disulfide bonds of the apocytochrome c to allow covalent linkage with the heme. Possible subunit of a heme lyase. This is Thiol:disulfide interchange protein DsbE (dsbE1) from Salmonella typhi.